We begin with the raw amino-acid sequence, 183 residues long: Non-classical export protein 2 homolog (183 aa).

Residues 1 to 8 lie on the Cytoplasmic side of the membrane; sequence MVGIRQYG. A helical transmembrane segment spans residues 9–29; it reads VFTWVFRTFQLAIDTIVLALA. Over 30-44 the chain is Extracellular; it reads SALVNQQTSGGSPGK. The chain crosses the membrane as a helical span at residues 45–65; it reads INFSVAVGSFAILTFFLTAVG. Topologically, residues 66–75 are cytoplasmic; the sequence is RFLPTILGNP. Residues 76–96 form a helical membrane-spanning segment; the sequence is WLIAFYDFVNWVFALTGGCCI. Topologically, residues 97 to 131 are extracellular; it reads AVAIRVHACDNQKYLDRNHYTQGSMRRCQELKALC. The helical transmembrane segment at 132–152 threads the bilayer; sequence FFLWFMFGLYVASFIVQIFIA. Residues 153-183 lie on the Cytoplasmic side of the membrane; the sequence is KNDTPNYTFRGRGRGKGSGPAVAPRPVMSAV. Residues 163 to 183 are disordered; that stretch reads GRGRGKGSGPAVAPRPVMSAV.

Belongs to the NCE102 family.

It is found in the cytoplasm. Its subcellular location is the golgi apparatus membrane. The protein localises to the cell membrane. Functionally, involved in membrane organization and might act as a sensor of sphingolipids that regulates plasma membrane function. Involved in a novel pathway of export of proteins that lack a cleavable signal sequence. The sequence is that of Non-classical export protein 2 homolog (fhn1) from Schizosaccharomyces pombe (strain 972 / ATCC 24843) (Fission yeast).